Here is a 79-residue protein sequence, read N- to C-terminus: Large ribosomal subunit protein bL31c (79 aa).

This sequence belongs to the bacterial ribosomal protein bL31 family. Type A subfamily. Part of the 50S ribosomal subunit.

Its subcellular location is the plastid. The protein resides in the chloroplast. In terms of biological role, binds the 23S rRNA. The polypeptide is Large ribosomal subunit protein bL31c (Gracilaria tenuistipitata var. liui (Red alga)).